The following is a 680-amino-acid chain: DNA-directed RNA polymerase subunit beta' (680 aa).

Positions 69, 71, 87, and 90 each coordinate Zn(2+). Residues Asp489, Asp491, and Asp493 each contribute to the Mg(2+) site.

It belongs to the RNA polymerase beta' chain family. RpoC1 subfamily. In terms of assembly, in plastids the minimal PEP RNA polymerase catalytic core is composed of four subunits: alpha, beta, beta', and beta''. When a (nuclear-encoded) sigma factor is associated with the core the holoenzyme is formed, which can initiate transcription. Mg(2+) is required as a cofactor. Zn(2+) serves as cofactor.

The protein resides in the plastid. It localises to the chloroplast. It carries out the reaction RNA(n) + a ribonucleoside 5'-triphosphate = RNA(n+1) + diphosphate. In terms of biological role, DNA-dependent RNA polymerase catalyzes the transcription of DNA into RNA using the four ribonucleoside triphosphates as substrates. This is DNA-directed RNA polymerase subunit beta' from Aethionema cordifolium (Lebanon stonecress).